Reading from the N-terminus, the 286-residue chain is Ribosomal RNA small subunit methyltransferase A (286 aa).

Positions 33, 35, 60, 81, 111, and 129 each coordinate S-adenosyl-L-methionine.

The protein belongs to the class I-like SAM-binding methyltransferase superfamily. rRNA adenine N(6)-methyltransferase family. RsmA subfamily.

It is found in the cytoplasm. The enzyme catalyses adenosine(1518)/adenosine(1519) in 16S rRNA + 4 S-adenosyl-L-methionine = N(6)-dimethyladenosine(1518)/N(6)-dimethyladenosine(1519) in 16S rRNA + 4 S-adenosyl-L-homocysteine + 4 H(+). In terms of biological role, specifically dimethylates two adjacent adenosines (A1518 and A1519) in the loop of a conserved hairpin near the 3'-end of 16S rRNA in the 30S particle. May play a critical role in biogenesis of 30S subunits. This Streptomyces coelicolor (strain ATCC BAA-471 / A3(2) / M145) protein is Ribosomal RNA small subunit methyltransferase A.